The following is a 340-amino-acid chain: Glycerol-3-phosphate dehydrogenase [NAD(P)+] (340 aa).

NADPH is bound by residues Trp-11, Arg-33, and Lys-110. Lys-110, Gly-144, and Ser-146 together coordinate sn-glycerol 3-phosphate. An NADPH-binding site is contributed by Ala-148. Sn-glycerol 3-phosphate contacts are provided by Lys-199, Asp-252, Ser-262, Arg-263, and Asn-264. Lys-199 acts as the Proton acceptor in catalysis. NADPH is bound at residue Arg-263. NADPH contacts are provided by Val-287 and Glu-289.

This sequence belongs to the NAD-dependent glycerol-3-phosphate dehydrogenase family.

Its subcellular location is the cytoplasm. It catalyses the reaction sn-glycerol 3-phosphate + NAD(+) = dihydroxyacetone phosphate + NADH + H(+). The enzyme catalyses sn-glycerol 3-phosphate + NADP(+) = dihydroxyacetone phosphate + NADPH + H(+). It participates in membrane lipid metabolism; glycerophospholipid metabolism. Its function is as follows. Catalyzes the reduction of the glycolytic intermediate dihydroxyacetone phosphate (DHAP) to sn-glycerol 3-phosphate (G3P), the key precursor for phospholipid synthesis. The sequence is that of Glycerol-3-phosphate dehydrogenase [NAD(P)+] from Polynucleobacter necessarius subsp. necessarius (strain STIR1).